Consider the following 208-residue polypeptide: Small ribosomal subunit protein uS4 (208 aa).

One can recognise an S4 RNA-binding domain in the interval 98–166 (SRLDNVVYRM…VKEAIEASRN (69 aa)).

Belongs to the universal ribosomal protein uS4 family. Part of the 30S ribosomal subunit. Contacts protein S5. The interaction surface between S4 and S5 is involved in control of translational fidelity.

Its function is as follows. One of the primary rRNA binding proteins, it binds directly to 16S rRNA where it nucleates assembly of the body of the 30S subunit. With S5 and S12 plays an important role in translational accuracy. This is Small ribosomal subunit protein uS4 from Kosmotoga olearia (strain ATCC BAA-1733 / DSM 21960 / TBF 19.5.1).